The chain runs to 221 residues: Large ribosomal subunit protein uL3 (221 aa).

The interval 123–156 (GFAGSIKRHNQSRGPESHGSRYHRRPGSMGPIKG) is disordered.

It belongs to the universal ribosomal protein uL3 family. In terms of assembly, part of the 50S ribosomal subunit. Forms a cluster with proteins L14 and L19.

Its function is as follows. One of the primary rRNA binding proteins, it binds directly near the 3'-end of the 23S rRNA, where it nucleates assembly of the 50S subunit. This chain is Large ribosomal subunit protein uL3, found in Aster yellows witches'-broom phytoplasma (strain AYWB).